The chain runs to 757 residues: Endonuclease MutS2 (757 aa).

An ATP-binding site is contributed by 321-328 (GPNMGGKT). In terms of domain architecture, Smr spans 681-756 (IDIRGMTVEE…GTGVTVVEVE (76 aa)).

This sequence belongs to the DNA mismatch repair MutS family. MutS2 subfamily. Homodimer. Binds to stalled ribosomes, contacting rRNA.

Endonuclease that is involved in the suppression of homologous recombination and thus may have a key role in the control of bacterial genetic diversity. Functionally, acts as a ribosome collision sensor, splitting the ribosome into its 2 subunits. Detects stalled/collided 70S ribosomes which it binds and splits by an ATP-hydrolysis driven conformational change. Acts upstream of the ribosome quality control system (RQC), a ribosome-associated complex that mediates the extraction of incompletely synthesized nascent chains from stalled ribosomes and their subsequent degradation. Probably generates substrates for RQC. The sequence is that of Endonuclease MutS2 from Thermotoga neapolitana (strain ATCC 49049 / DSM 4359 / NBRC 107923 / NS-E).